A 575-amino-acid polypeptide reads, in one-letter code: Bifunctional decalin synthase calF (575 aa).

A signal peptide spans 1 to 18 (MSFKPLLLSLSLLSPALG). N-linked (GlcNAc...) asparagine glycans are attached at residues asparagine 46, asparagine 103, asparagine 127, asparagine 175, asparagine 268, asparagine 308, asparagine 359, asparagine 425, and asparagine 485. The 180-residue stretch at 118-297 (LGNYASYSIN…LSMTTKVFQD (180 aa)) folds into the FAD-binding PCMH-type domain.

The protein belongs to the oxygen-dependent FAD-linked oxidoreductase family.

It participates in secondary metabolite biosynthesis. In terms of biological role, bifunctional decaline synthase; part of the gene cluster that mediates the biosynthesis of calbistrin A and related compounds. Calbistrin A is a secondary metabolite with an interesting structure that was recently found to have bioactivity against leukemia cells. It consists of two polyketides linked by an ester bond: a bicyclic decalin containing polyketide and a linear 12 carbon dioic acid structure. The polyketide synthase calA is probably responsible for forming the decalin moiety. Because calA lacks a designated enoylreductase (ER) domain, the required activity is provided by the trans-enoyl reductase calK. Following release from the PKS, calF then probably catalyzes the oxidation and the subsequent Diels Alder cycloisomerization that lead to the formation of the decalin moiety. The decalin polyketide backbone includes two C-methyl groups, at C7 and C11 in backbone, of which the C7 position is probably methylated by the methyltransferase domain of calA. A candidate for adding the methyl group at C11, if not done by CalA, is the cluster methyltransferase calH. Several additional tailoring enzymes within the cluster could be involved in the modification of the decalin polyketide product. Those include the 3 cytochrome P450 monooxygenases CalE, CalG and CalL, of which one might be responsible for the introduction of the extra hydroxyl group attached to the backbone of the decalin moiety, at position C9 in the backbone, that allows for attachment of the linear moiety. One tailoring enzyme activity that is expected to be involved in biosynthesis of calbistrin is an acyltransferase for connecting the two polyketide synthase products, and which could be performed by the cluster acyltransferase calJ. The enzyme responsible for the biosynthesis of the linear moiety, probably a second PKS, has not been identified yet. This is Bifunctional decalin synthase calF from Penicillium decumbens.